The sequence spans 149 residues: Transcriptional regulator MraZ (149 aa).

SpoVT-AbrB domains lie at 7-54 (KYVN…GISH) and 83-126 (ALQL…QPQN).

Belongs to the MraZ family. Forms oligomers.

Its subcellular location is the cytoplasm. It is found in the nucleoid. The protein is Transcriptional regulator MraZ of Rickettsia canadensis (strain McKiel).